We begin with the raw amino-acid sequence, 512 residues long: Cytochrome P450 4d1 (512 aa).

The heme site is built by Glu316 and Cys456.

This sequence belongs to the cytochrome P450 family. Requires heme as cofactor.

The protein resides in the endoplasmic reticulum membrane. The protein localises to the microsome membrane. Functionally, involved in the metabolism of insect hormones and in the breakdown of synthetic insecticides. The sequence is that of Cytochrome P450 4d1 (Cyp4d1) from Drosophila simulans (Fruit fly).